The sequence spans 1663 residues: Glutamine-rich protein 2 (1663 aa).

5 disordered regions span residues 80–239 (HGGF…LVPA), 423–481 (GLVQ…GTGQ), 575–615 (AQPR…QHGL), 880–925 (TYQQ…QVYP), and 948–984 (RGPG…APGQ). 2 stretches are compositionally biased toward polar residues: residues 84–103 (TSLT…QPSI) and 131–150 (GVSS…QQQP). Residues 171 to 182 (SDSDRHRSREKL) are compositionally biased toward basic and acidic residues. The segment covering 206–217 (QPSSVPASQSQV) has biased composition (low complexity). A compositionally biased stretch (basic and acidic residues) spans 958-975 (HGQEGLDPNRTRASDRHG). Coiled-coil stretches lie at residues 1085–1160 (KTVK…MENS) and 1286–1325 (EDHR…KADK). A compositionally biased stretch (basic and acidic residues) spans 1609–1619 (TRLPGILRKDS). The segment at 1609-1663 (TRLPGILRKDSSGTSKRKSQQPRPHVHRPPSLSSNGQLPSRPQSAQISAGNTSER) is disordered. Positions 1623-1636 (SKRKSQQPRPHVHR) are enriched in basic residues. Residues 1639–1663 (SLSSNGQLPSRPQSAQISAGNTSER) are compositionally biased toward polar residues.

In terms of assembly, interacts with AKAP3, ODF2 and TSSK4. Interacts with AKAP4. Expressed in the sperm.

The protein resides in the nucleus membrane. Its subcellular location is the nucleus. It localises to the cytoplasm. The protein localises to the cell projection. It is found in the cilium. The protein resides in the flagellum. Functionally, has an essential role in the formation of sperm flagella and flagellar structure maintainance. It acts as a suppressor of ubiquitination and degradation of proteins involved in flagellar development and motility. In Homo sapiens (Human), this protein is Glutamine-rich protein 2 (QRICH2).